Consider the following 197-residue polypeptide: Neurturin (197 aa).

The N-terminal stretch at 1-19 is a signal peptide; it reads MQRWKAAALASVLCSSVLS. Residues 20 to 95 constitute a propeptide that is removed on maturation; sequence IWMCREGLLL…RAGPRRRRAR (76 aa). The tract at residues 74 to 93 is disordered; that stretch reads TPWAGRPPGPRRRAGPRRRR. The span at 82 to 93 shows a compositional bias: basic residues; that stretch reads GPRRRAGPRRRR. 3 disulfides stabilise this stretch: cysteine 103–cysteine 165, cysteine 130–cysteine 194, and cysteine 134–cysteine 196. Heparan sulfate group-binding residues include arginine 149, arginine 158, arginine 160, and glutamine 162.

The protein belongs to the TGF-beta family. GDNF subfamily. In terms of assembly, homodimer; disulfide-linked. Interacts with GFRA2 coreceptor and RET: forms a 2:2:2 ternary complex composed of NRTN ligand, GFRA2 and RET receptor. Also forms a 4:4:4 tetrameric complex composed of 4 copies of NRTN ligand, GFRA2 and RET receptor, which prevents endocytosis of RET.

Its subcellular location is the secreted. In terms of biological role, growth factor that supports the survival of sympathetic neurons in culture. May regulate the development and maintenance of the CNS. Involved in the development of the neural crest. Might control the size of non-neuronal cell population such as haemopoietic cells. Acts by binding to its coreceptor, GFRA2, leading to autophosphorylation and activation of the RET receptor. Heparan sulfate-binding is required for signaling. In Homo sapiens (Human), this protein is Neurturin.